Consider the following 505-residue polypeptide: Probable inorganic carbon transporter subunit DabB (505 aa).

13 helical membrane-spanning segments follow: residues 9-29 (SLLTLFFIMLMASGISGLLFL), 37-57 (FVRIHIGILALPLLVSLLILA), 68-88 (WHLDSLACLMTFFVLAIGFII), 105-123 (YFTLFTFTTGAASMTWLSG), 162-182 (LFLLSWFSLFFAMMWLFHATG), 204-224 (TGIQLLIVLAVIIPAAQWPFQ), 231-251 (IVAPTPVSAIMHAGLVNAGGI), 259-279 (LFHGGIASIILLLLASISVLI), 303-323 (GFMLIQCALGAYIAAIIHLIL), 355-375 (LWVMAGRILSLVIGVAFWLTA), 382-402 (LISALILGWSLSVSWDQLVAF), 410-430 (IAGLTVLGGAALVYFIIHHLF), and 446-466 (MSAVMIVVCLLLFGSALGTWV).

This sequence belongs to the inorganic carbon transporter (TC 9.A.2) DabB family. As to quaternary structure, forms a complex with DabA.

It localises to the cell membrane. In terms of biological role, part of an energy-coupled inorganic carbon pump. This is Probable inorganic carbon transporter subunit DabB from Bacillus subtilis (strain 168).